We begin with the raw amino-acid sequence, 227 residues long: NADH-quinone oxidoreductase subunit C (227 aa).

The protein belongs to the complex I 30 kDa subunit family. In terms of assembly, NDH-1 is composed of 14 different subunits. Subunits NuoB, C, D, E, F, and G constitute the peripheral sector of the complex.

It localises to the cell inner membrane. The enzyme catalyses a quinone + NADH + 5 H(+)(in) = a quinol + NAD(+) + 4 H(+)(out). Its function is as follows. NDH-1 shuttles electrons from NADH, via FMN and iron-sulfur (Fe-S) centers, to quinones in the respiratory chain. The immediate electron acceptor for the enzyme in this species is believed to be ubiquinone. Couples the redox reaction to proton translocation (for every two electrons transferred, four hydrogen ions are translocated across the cytoplasmic membrane), and thus conserves the redox energy in a proton gradient. This Legionella pneumophila (strain Lens) protein is NADH-quinone oxidoreductase subunit C.